A 98-amino-acid chain; its full sequence is Citrate lyase acyl carrier protein (98 aa).

Position 14 is an O-(phosphoribosyl dephospho-coenzyme A)serine (S14).

This sequence belongs to the CitD family. Oligomer with a subunit composition of (alpha,beta,gamma)6.

The protein resides in the cytoplasm. Its function is as follows. Covalent carrier of the coenzyme of citrate lyase. The sequence is that of Citrate lyase acyl carrier protein from Albidiferax ferrireducens (strain ATCC BAA-621 / DSM 15236 / T118) (Rhodoferax ferrireducens).